The primary structure comprises 118 residues: Na(+)/H(+) antiporter subunit G1 (118 aa).

A run of 3 helical transmembrane segments spans residues isoleucine 4–alanine 24, alanine 38–leucine 58, and phenylalanine 60–isoleucine 80.

It belongs to the CPA3 antiporters (TC 2.A.63) subunit G family. As to quaternary structure, may form a heterooligomeric complex that consists of seven subunits: mnhA1, mnhB1, mnhC1, mnhD1, mnhE1, mnhF1 and mnhG1.

The protein localises to the cell membrane. Functionally, mnh complex is a Na(+)/H(+) antiporter involved in Na(+) excretion. The chain is Na(+)/H(+) antiporter subunit G1 (mnhG1) from Staphylococcus aureus (strain Mu3 / ATCC 700698).